Consider the following 86-residue polypeptide: U22-theraphotoxin-Cg1a (86 aa).

Residues 1 to 20 form the signal peptide; that stretch reads MKVSVVLAITVLALLSVAYA. Residues 21 to 51 constitute a propeptide that is removed on maturation; sequence SEFEEKELVKEVVRTIFLGKEDAALREETDR. 3 disulfides stabilise this stretch: C53-C67, C60-C72, and C66-C79. F85 carries the phenylalanine amide modification.

This sequence belongs to the neurotoxin 10 (Hwtx-1) family. 42 (Jztx-44) subfamily. In terms of tissue distribution, expressed by the venom gland.

The protein resides in the secreted. Probable ion channel inhibitor. The chain is U22-theraphotoxin-Cg1a from Chilobrachys guangxiensis (Chinese earth tiger tarantula).